The primary structure comprises 400 residues: Tryptophan synthase beta chain (400 aa).

Lys-92 carries the post-translational modification N6-(pyridoxal phosphate)lysine.

This sequence belongs to the TrpB family. Tetramer of two alpha and two beta chains. Requires pyridoxal 5'-phosphate as cofactor.

It catalyses the reaction (1S,2R)-1-C-(indol-3-yl)glycerol 3-phosphate + L-serine = D-glyceraldehyde 3-phosphate + L-tryptophan + H2O. It participates in amino-acid biosynthesis; L-tryptophan biosynthesis; L-tryptophan from chorismate: step 5/5. The beta subunit is responsible for the synthesis of L-tryptophan from indole and L-serine. This chain is Tryptophan synthase beta chain, found in Leptospira borgpetersenii serovar Hardjo-bovis (strain JB197).